The sequence spans 629 residues: Chaperone protein HtpG (629 aa).

The a; substrate-binding stretch occupies residues 1 to 336 (MSSTENNGTA…TEDLSLNVSR (336 aa)). The segment at 337–549 (EMVQSSPVMA…KDAIDSQLER (213 aa)) is b. The segment at 550 to 629 (MMKMMNTPMP…ELIEAATLTR (80 aa)) is c.

Belongs to the heat shock protein 90 family. Homodimer.

The protein resides in the cytoplasm. Molecular chaperone. Has ATPase activity. The polypeptide is Chaperone protein HtpG (Chlorobium chlorochromatii (strain CaD3)).